The following is a 180-amino-acid chain: Segregation and condensation protein B (180 aa).

The protein belongs to the ScpB family. Homodimer. Homodimerization may be required to stabilize the binding of ScpA to the Smc head domains. Component of a cohesin-like complex composed of ScpA, ScpB and the Smc homodimer, in which ScpA and ScpB bind to the head domain of Smc. The presence of the three proteins is required for the association of the complex with DNA.

Its subcellular location is the cytoplasm. In terms of biological role, participates in chromosomal partition during cell division. May act via the formation of a condensin-like complex containing Smc and ScpA that pull DNA away from mid-cell into both cell halves. The sequence is that of Segregation and condensation protein B from Staphylococcus aureus (strain Mu3 / ATCC 700698).